A 386-amino-acid polypeptide reads, in one-letter code: Leupaxin (386 aa).

Met1 is modified (N-acetylmethionine). The short motif at 3-15 (ELDALLEELERST) is the LD motif 1 element. The disordered stretch occupies residues 12 to 51 (ERSTLQDSDEYSNSAPLPLDQSSRKESNLDETSKMLSVQD). Over residues 16–26 (LQDSDEYSNSA) the composition is skewed to polar residues. Ser19 carries the phosphoserine modification. Tyr22 is modified (phosphotyrosine). Residues 33-44 (SSRKESNLDETS) show a composition bias toward basic and acidic residues. Position 62 is a phosphotyrosine (Tyr62). 2 short sequence motifs (LD motif) span residues 70-82 (NVYSEVQEPKKSP) and 92-103 (QLDELMAHLSEM). Phosphotyrosine; by LYN is present on Tyr72. At Ser81 the chain carries Phosphoserine. 4 LIM zinc-binding domains span residues 150-209 (GHCA…LFSP), 210-267 (RCAY…AMFS), 268-327 (PKCG…RRGT), and 328-386 (LCHG…LFSL).

The protein belongs to the paxillin family. In terms of assembly, interacts with unphosphorylated ITGA4. Interacts with AR and SRF. Interacts with PTK2B/PYK2, PTPN22 and PTPN12. Interacts (via LD motif 3) with LYN and the interaction is induced upon B-cell antigen receptor (BCR) activation. Interacts (via LD motif 3) with PTK2/FAK. Post-translationally, phosphorylated on tyrosine residues. Phosphorylation on Tyr-72 is important for its inhibitory function. Bombesin stimulates phosphorylation on Tyr-22, Tyr-62 and Tyr-72.

It is found in the cytoplasm. The protein resides in the cell junction. The protein localises to the focal adhesion. It localises to the nucleus. Its subcellular location is the perinuclear region. It is found in the cell projection. The protein resides in the podosome. The protein localises to the cell membrane. Its function is as follows. Transcriptional coactivator for androgen receptor (AR) and serum response factor (SRF). Contributes to the regulation of cell adhesion, spreading and cell migration and acts as a negative regulator in integrin-mediated cell adhesion events. Suppresses the integrin-induced tyrosine phosphorylation of paxillin (PXN). May play a critical role as an adapter protein in the formation of the adhesion zone in osteoclasts. Negatively regulates B-cell antigen receptor (BCR) signaling. The polypeptide is Leupaxin (LPXN) (Oryctolagus cuniculus (Rabbit)).